A 71-amino-acid chain; its full sequence is GEECDCGSPANPCCDAATCKLRPGAQCADGLCCDQCRFIKKGTICRRARGDNPDDRCTGQSADCPRNHFHA.

Residues 1–71 (GEECDCGSPA…ADCPRNHFHA (71 aa)) form the Disintegrin domain. Cystine bridges form between Cys-4–Cys-19, Cys-6–Cys-14, Cys-13–Cys-36, Cys-27–Cys-33, Cys-32–Cys-57, and Cys-45–Cys-64. The Cell attachment site signature appears at 49 to 51 (RGD).

The protein belongs to the venom metalloproteinase (M12B) family. P-II subfamily. P-IIa sub-subfamily. Expressed by the venom gland.

The protein localises to the secreted. In terms of biological role, inhibits fibrinogen interaction with platelets. Acts by binding to alpha-IIb/beta-3 (ITGA2B/ITGB3) on the platelet surface and inhibits aggregation induced by ADP, thrombin, platelet-activating factor and collagen. Inhibits cell adhesion to vitronectin, probably by blocking its receptor integrin alpha-V/beta-3 (ITGAV/ITGB3), and to fibronectin in vitro. Shows little to no cytotoxicity in vitro. The sequence is that of Disintegrin tzabcanin from Crotalus tzabcan (Yucatan neotropical rattlesnake).